The primary structure comprises 193 residues: dCTP deaminase (193 aa).

DCTP-binding positions include 110 to 115 (RSSLAR), D128, 136 to 138 (VLE), Y171, K178, and Q182. The Proton donor/acceptor role is filled by E138. Residues 169–193 (RPYNSRQDAKYKGQQGAVASRIDKD) form a disordered region.

This sequence belongs to the dCTP deaminase family. Homotrimer.

It catalyses the reaction dCTP + H2O + H(+) = dUTP + NH4(+). It functions in the pathway pyrimidine metabolism; dUMP biosynthesis; dUMP from dCTP (dUTP route): step 1/2. Catalyzes the deamination of dCTP to dUTP. The protein is dCTP deaminase of Erwinia tasmaniensis (strain DSM 17950 / CFBP 7177 / CIP 109463 / NCPPB 4357 / Et1/99).